The primary structure comprises 352 residues: Selenide, water dikinase (352 aa).

The active site involves Cys23. ATP is bound by residues Lys26 and 54–56 (SRD). Position 57 (Asp57) interacts with Mg(2+). ATP contacts are provided by residues Asp74, Asp97, and 145-147 (GHS). Asp97 contributes to the Mg(2+) binding site. Asp233 is a binding site for Mg(2+).

It belongs to the selenophosphate synthase 1 family. Class I subfamily. As to quaternary structure, homodimer. Requires Mg(2+) as cofactor.

The catalysed reaction is hydrogenselenide + ATP + H2O = selenophosphate + AMP + phosphate + 2 H(+). Functionally, synthesizes selenophosphate from selenide and ATP. This chain is Selenide, water dikinase, found in Shewanella baltica (strain OS185).